A 90-amino-acid polypeptide reads, in one-letter code: U7-theraphotoxin-Hhn1k (90 aa).

Residues 1–19 form the signal peptide; the sequence is MKTAIFTVVLALAVFAVLS. A propeptide spanning residues 20–50 is cleaved from the precursor; sequence FGWEANEKALSEEFTELIHEKEAASETEARE. Disulfide bonds link Cys-51–Cys-65 and Cys-58–Cys-70.

It belongs to the neurotoxin 10 (Hwtx-1) family. 13 (Hntx-13) subfamily. In terms of tissue distribution, expressed by the venom gland.

It localises to the secreted. Ion channel inhibitor. This chain is U7-theraphotoxin-Hhn1k, found in Cyriopagopus hainanus (Chinese bird spider).